We begin with the raw amino-acid sequence, 522 residues long: Putative E3 ubiquitin-protein ligase RING1a (522 aa).

A compositionally biased stretch (polar residues) spans 1–10 (MSVKNNSFSS). Positions 1 to 119 (MSVKNNSFSS…RSPSSISGDQ (119 aa)) are disordered. The segment covering 32–64 (LQEKDETKEEKEGDEEVKHDEAEEDQEVVKPND) has biased composition (basic and acidic residues). A compositionally biased stretch (acidic residues) spans 65-106 (AEEDDDGDDAEEDEEEEVEAEEDEEAEEEEEEEEEEEEEEED). The RING-type zinc-finger motif lies at 136 to 176 (CPICLGIIKKTRTVMECLHRFCRECIDKSMRLGNNECPACR). 2 disordered regions span residues 250–347 (VLMR…DTKG) and 363–385 (RGGT…KSVR). The span at 287–306 (NNNRGRDKDSSSDERGTEVR) shows a compositional bias: basic and acidic residues. The span at 316 to 325 (SRSTQHPSSS) shows a compositional bias: low complexity. Composition is skewed to polar residues over residues 326–336 (GANKNNGNCAD) and 366–384 (TRSN…SKSV).

Homodimer or heterodimer with RING1B. Interacts with CLF. Component of the PRC1-like complex, at least composed of RING1A, RING1B and LHP1.

It is found in the nucleus. It catalyses the reaction S-ubiquitinyl-[E2 ubiquitin-conjugating enzyme]-L-cysteine + [acceptor protein]-L-lysine = [E2 ubiquitin-conjugating enzyme]-L-cysteine + N(6)-ubiquitinyl-[acceptor protein]-L-lysine.. It participates in protein modification; protein ubiquitination. Functionally, putative E3 ubiquitin-protein ligase that mediates monoubiquitination of 'Lys-119' of histone H2A (H2AK119ub), thereby playing a central role in histone code and gene regulation. As part of the PRC1-like complex, repress class I KNOX gene expression. PcG PRC1 complex maintains the transcriptionally repressive state of many genes, including Hox genes, throughout development. PcG PRC1 complex acts via chromatin remodeling and modification of histones, rendering chromatin heritably changed in its expressibility. This chain is Putative E3 ubiquitin-protein ligase RING1a (RING1A), found in Arabidopsis thaliana (Mouse-ear cress).